The chain runs to 236 residues: Uridylate kinase (236 aa).

K10–G13 contributes to the ATP binding site. Position 52 (G52) interacts with UMP. The ATP site is built by G53 and R57. UMP is bound by residues D72 and T133–T140. Residues T160, Y166, and D169 each coordinate ATP.

It belongs to the UMP kinase family. As to quaternary structure, homohexamer.

Its subcellular location is the cytoplasm. The enzyme catalyses UMP + ATP = UDP + ADP. The protein operates within pyrimidine metabolism; CTP biosynthesis via de novo pathway; UDP from UMP (UMPK route): step 1/1. With respect to regulation, inhibited by UTP. Functionally, catalyzes the reversible phosphorylation of UMP to UDP. The protein is Uridylate kinase of Ralstonia nicotianae (strain ATCC BAA-1114 / GMI1000) (Ralstonia solanacearum).